The primary structure comprises 426 residues: D-tagatose-1,6-bisphosphate aldolase subunit KbaZ (426 aa).

This sequence belongs to the GatZ/KbaZ family. KbaZ subfamily. As to quaternary structure, forms a complex with KbaY.

It functions in the pathway carbohydrate metabolism; D-tagatose 6-phosphate degradation; D-glyceraldehyde 3-phosphate and glycerone phosphate from D-tagatose 6-phosphate: step 2/2. In terms of biological role, component of the tagatose-1,6-bisphosphate aldolase KbaYZ that is required for full activity and stability of the Y subunit. Could have a chaperone-like function for the proper and stable folding of KbaY. When expressed alone, KbaZ does not show any aldolase activity. This chain is D-tagatose-1,6-bisphosphate aldolase subunit KbaZ, found in Escherichia coli (strain 55989 / EAEC).